A 348-amino-acid chain; its full sequence is Mannonate dehydratase (348 aa).

The protein belongs to the mannonate dehydratase family. The cofactor is Fe(2+). Mn(2+) is required as a cofactor.

It catalyses the reaction D-mannonate = 2-dehydro-3-deoxy-D-gluconate + H2O. It participates in carbohydrate metabolism; pentose and glucuronate interconversion. In terms of biological role, catalyzes the dehydration of D-mannonate. The protein is Mannonate dehydratase of Staphylococcus haemolyticus (strain JCSC1435).